The primary structure comprises 356 residues: S-adenosylmethionine:tRNA ribosyltransferase-isomerase (356 aa).

The protein belongs to the QueA family. In terms of assembly, monomer.

It localises to the cytoplasm. The enzyme catalyses 7-aminomethyl-7-carbaguanosine(34) in tRNA + S-adenosyl-L-methionine = epoxyqueuosine(34) in tRNA + adenine + L-methionine + 2 H(+). Its pathway is tRNA modification; tRNA-queuosine biosynthesis. In terms of biological role, transfers and isomerizes the ribose moiety from AdoMet to the 7-aminomethyl group of 7-deazaguanine (preQ1-tRNA) to give epoxyqueuosine (oQ-tRNA). This is S-adenosylmethionine:tRNA ribosyltransferase-isomerase from Xanthomonas axonopodis pv. citri (strain 306).